A 416-amino-acid chain; its full sequence is Serine/threonine transporter SstT (416 aa).

9 helical membrane passes run 15-35 (SLVS…MFMP), 49-69 (VGAL…AAII), 82-102 (ILLL…VASF), 141-161 (ALMD…GIAM), 192-212 (LGIL…ALFG), 217-237 (LVVL…IIVF), 288-308 (VSIP…ITVL), 330-350 (VVAT…LLLI), and 356-376 (LFGI…IIGV).

Belongs to the dicarboxylate/amino acid:cation symporter (DAACS) (TC 2.A.23) family.

It is found in the cell inner membrane. It carries out the reaction L-serine(in) + Na(+)(in) = L-serine(out) + Na(+)(out). It catalyses the reaction L-threonine(in) + Na(+)(in) = L-threonine(out) + Na(+)(out). Involved in the import of serine and threonine into the cell, with the concomitant import of sodium (symport system). In Aeromonas salmonicida (strain A449), this protein is Serine/threonine transporter SstT.